The primary structure comprises 260 residues: Small ribosomal subunit protein uS3 (260 aa).

The KH type-2 domain occupies 39–114 (LRQYIEQKLG…QIRINVVEVQ (76 aa)). Residues 219 to 260 (EVAAPPPSTRDRDRDRGDRDREPRRRQQQRRRQQFEDRSNEG) form a disordered region. 2 stretches are compositionally biased toward basic and acidic residues: residues 227-243 (TRDR…EPRR) and 251-260 (QQFEDRSNEG).

It belongs to the universal ribosomal protein uS3 family. Part of the 30S ribosomal subunit. Forms a tight complex with proteins S10 and S14.

Binds the lower part of the 30S subunit head. Binds mRNA in the 70S ribosome, positioning it for translation. The chain is Small ribosomal subunit protein uS3 from Trichormus variabilis (strain ATCC 29413 / PCC 7937) (Anabaena variabilis).